The chain runs to 174 residues: Phospholipase A2-like protein Y52B11A.8 (174 aa).

The N-terminal stretch at 1–18 (MRGLLVATWIFVSVAASA) is a signal peptide. Asn-49 and Asn-143 each carry an N-linked (GlcNAc...) asparagine glycan. The tract at residues 137–174 (YEASGPNASTTEESPAEKDDYDYESHVAGLNATPSSST) is disordered.

It belongs to the phospholipase A2 family.

It is found in the secreted. The sequence is that of Phospholipase A2-like protein Y52B11A.8 from Caenorhabditis elegans.